The primary structure comprises 132 residues: Small ribosomal subunit protein eS24 (132 aa).

Residues 90-100 (RLARHGLFEKK) are compositionally biased toward basic and acidic residues. A disordered region spans residues 90–132 (RLARHGLFEKKKTSRKQRKERKNRMKKVRGTKKASVGASKKKD). A compositionally biased stretch (basic residues) spans 101 to 121 (KTSRKQRKERKNRMKKVRGTK).

Belongs to the eukaryotic ribosomal protein eS24 family. Component of the small ribosomal subunit.

The protein resides in the cytoplasm. Functionally, component of the small ribosomal subunit. The ribosome is a large ribonucleoprotein complex responsible for the synthesis of proteins in the cell. Required for processing of pre-rRNA and maturation of 40S ribosomal subunits. In Takifugu rubripes (Japanese pufferfish), this protein is Small ribosomal subunit protein eS24 (rps24).